A 60-amino-acid chain; its full sequence is UPF0291 protein CTC_01690.1 (60 aa).

It belongs to the UPF0291 family.

Its subcellular location is the cytoplasm. In Clostridium tetani (strain Massachusetts / E88), this protein is UPF0291 protein CTC_01690.1.